We begin with the raw amino-acid sequence, 609 residues long: Actin-interacting protein 1-2 (609 aa).

WD repeat units lie at residues 2 to 42 (ELSE…VTLD), 54 to 93 (EHAY…VLKN), 97 to 141 (VLAG…GEFD), 142 to 182 (GHSR…FKLS), 185 to 224 (EHSN…ILGE), 230 to 269 (GHKG…SGSL), 277 to 318 (GSSG…KSPF), 322 to 362 (GHMK…CGKL), 445 to 484 (NLGF…LTEE), 489 to 528 (RHRG…MKLK), 532 to 571 (YHSA…SSRM), and 576 to 609 (AHLG…FTPQ).

As to expression, expressed in leaves, stems, flower buds and flowers.

Functionally, binds actin. Enhances the F-actin depolymerization activity of actin-depolymerizing factor (ADF) proteins. The sequence is that of Actin-interacting protein 1-2 from Arabidopsis thaliana (Mouse-ear cress).